Consider the following 267-residue polypeptide: Enolase-phosphatase E1 (267 aa).

The Mg(2+) site is built by Asp-11 and Glu-13. Substrate is bound by residues 155–156 (SS) and Lys-189. Residue Asp-215 participates in Mg(2+) binding.

It belongs to the HAD-like hydrolase superfamily. MasA/MtnC family. In terms of assembly, monomer. The cofactor is Mg(2+).

The protein localises to the cytoplasm. It is found in the nucleus. It catalyses the reaction 5-methylsulfanyl-2,3-dioxopentyl phosphate + H2O = 1,2-dihydroxy-5-(methylsulfanyl)pent-1-en-3-one + phosphate. The protein operates within amino-acid biosynthesis; L-methionine biosynthesis via salvage pathway; L-methionine from S-methyl-5-thio-alpha-D-ribose 1-phosphate: step 3/6. It functions in the pathway amino-acid biosynthesis; L-methionine biosynthesis via salvage pathway; L-methionine from S-methyl-5-thio-alpha-D-ribose 1-phosphate: step 4/6. Functionally, bifunctional enzyme that catalyzes the enolization of 2,3-diketo-5-methylthiopentyl-1-phosphate (DK-MTP-1-P) into the intermediate 2-hydroxy-3-keto-5-methylthiopentenyl-1-phosphate (HK-MTPenyl-1-P), which is then dephosphorylated to form the acireductone 1,2-dihydroxy-3-keto-5-methylthiopentene (DHK-MTPene). This Dictyostelium discoideum (Social amoeba) protein is Enolase-phosphatase E1 (enoph1).